An 89-amino-acid chain; its full sequence is Long neurotoxin 1 (89 aa).

The signal sequence occupies residues M1–S21. Cystine bridges form between C24–C41, C34–C58, C62–C74, and C75–C80.

Belongs to the three-finger toxin family. Long-chain subfamily. Type II alpha-neurotoxin sub-subfamily. As to expression, expressed by the venom gland.

It localises to the secreted. Its function is as follows. Binds with high affinity to muscular (alpha-1/CHRNA1) and neuronal (alpha-7/CHRNA7) nicotinic acetylcholine receptor (nAChR) and inhibits acetylcholine from binding to the receptor, thereby impairing neuromuscular and neuronal transmission. This chain is Long neurotoxin 1, found in Pseudonaja textilis (Eastern brown snake).